Here is a 295-residue protein sequence, read N- to C-terminus: Small ribosomal subunit protein uS2 (295 aa).

An N-acetylserine modification is found at serine 2. A Phosphoserine modification is found at serine 43. The residue at position 52 (lysine 52) is an N6-acetyllysine. Residues 54-113 (TWEKLLLAARAIVAIENPADVSVISSRNTGQRAVLKFAAATGATPIAGRFTPGTFTNQIQ) form an interaction with PPP1R16B region. An N6-acetyllysine; alternate modification is found at lysine 89. Lysine 89 participates in a covalent cross-link: Glycyl lysine isopeptide (Lys-Gly) (interchain with G-Cter in SUMO2); alternate. Residue threonine 97 is modified to Phosphothreonine. 2 laminin-binding regions span residues 161–180 (IPCN…MLAR) and 205–229 (RDPE…EFQG). 5 [DE]-W-[ST] repeats span residues 230 to 232 (EWT), 247 to 249 (DWS), 266 to 268 (DWS), 275 to 277 (DWS), and 293 to 295 (EWS). The laminin-binding stretch occupies residues 242–295 (QPEVADWSEGVQVPSVPIQQFPTEDWSAQPATEDWSAAPTAQATEWVGATTEWS). Positions 266 to 295 (DWSAQPATEDWSAAPTAQATEWVGATTEWS) are disordered.

It belongs to the universal ribosomal protein uS2 family. In terms of assembly, monomer (37LRP) and homodimer (67LR). Component of the small ribosomal subunit. Mature ribosomes consist of a small (40S) and a large (60S) subunit. The 40S subunit contains about 33 different proteins and 1 molecule of RNA (18S). The 60S subunit contains about 49 different proteins and 3 molecules of RNA (28S, 5.8S and 5S). Interacts with RPS21. Interacts with several laminins including at least LAMB1. Interacts with MDK. The mature dimeric form interacts with PPP1R16B (via its fourth ankyrin repeat). Interacts with PPP1CA only in the presence of PPP1R16B. In terms of processing, acylated. Acylation may be a prerequisite for conversion of the monomeric 37 kDa laminin receptor precursor (37LRP) to the mature dimeric 67 kDa laminin receptor (67LR), and may provide a mechanism for membrane association. Post-translationally, cleaved by stromelysin-3 (ST3) at the cell surface. Cleavage by stromelysin-3 may be a mechanism to alter cell-extracellular matrix interactions.

The protein resides in the cell membrane. It is found in the cytoplasm. Its subcellular location is the nucleus. Its function is as follows. Required for the assembly and/or stability of the 40S ribosomal subunit. Required for the processing of the 20S rRNA-precursor to mature 18S rRNA in a late step of the maturation of 40S ribosomal subunits. Also functions as a cell surface receptor for laminin. Plays a role in cell adhesion to the basement membrane and in the consequent activation of signaling transduction pathways. May play a role in cell fate determination and tissue morphogenesis. Also acts as a receptor for several other ligands, including the pathogenic prion protein, viruses, and bacteria. Acts as a PPP1R16B-dependent substrate of PPP1CA. This Chlorocebus aethiops (Green monkey) protein is Small ribosomal subunit protein uS2.